The primary structure comprises 437 residues: Elongation factor 1-gamma (437 aa).

Position 2 is an N-acetylalanine (Ala-2). Positions 2-87 (AAGTLYTYPE…YVSNEELRGS (86 aa)) constitute a GST N-terminal domain. The region spanning 88–216 (TPEAAAQVVQ…VKLCEKMAQF (129 aa)) is the GST C-terminal domain. An N6-acetyllysine mark is found at Lys-147 and Lys-212. Over residues 221 to 254 (FAESQPKKDTPRKEKGSREEKQKPQTERKEEKKA) the composition is skewed to basic and acidic residues. Residues 221-268 (FAESQPKKDTPRKEKGSREEKQKPQTERKEEKKAAAPAPEEEMDECEQ) are disordered. Lys-253 participates in a covalent cross-link: Glycyl lysine isopeptide (Lys-Gly) (interchain with G-Cter in SUMO1). Positions 276–437 (AKDPFAHLPK…KAVNQGKIFK (162 aa)) constitute an EF-1-gamma C-terminal domain. Residue Lys-285 forms a Glycyl lysine isopeptide (Lys-Gly) (interchain with G-Cter in SUMO2) linkage. Lys-401 is modified (N6-acetyllysine). Lys-434 carries the N6-acetyllysine; alternate modification. Lys-434 carries the N6-malonyllysine; alternate modification.

EF-1 is composed of four subunits: alpha, beta, delta, and gamma.

Its function is as follows. Probably plays a role in anchoring the complex to other cellular components. This chain is Elongation factor 1-gamma (Eef1g), found in Rattus norvegicus (Rat).